A 274-amino-acid chain; its full sequence is Large ribosomal subunit protein uL2 (274 aa).

Disordered stretches follow at residues 28-55 (APHAPLLEKKSKSGGRNNNGRITTRHVG) and 224-274 (VAMN…RRRK).

Belongs to the universal ribosomal protein uL2 family. In terms of assembly, part of the 50S ribosomal subunit. Forms a bridge to the 30S subunit in the 70S ribosome.

One of the primary rRNA binding proteins. Required for association of the 30S and 50S subunits to form the 70S ribosome, for tRNA binding and peptide bond formation. It has been suggested to have peptidyltransferase activity; this is somewhat controversial. Makes several contacts with the 16S rRNA in the 70S ribosome. This chain is Large ribosomal subunit protein uL2, found in Pseudomonas putida (strain W619).